Consider the following 317-residue polypeptide: uncharacterized protein (317 aa).

Residues 1–13 (MKRVTGVFLTLLR) lie on the Cytoplasmic side of the membrane. A helical transmembrane segment spans residues 14–34 (FSQFASSVLVMSLLAYAIHAY). Over 35-49 (GNRGNKKTNFTLATG) the chain is Extracellular. Asn43 carries an N-linked (GlcNAc...) asparagine glycan. The chain crosses the membrane as a helical span at residues 50–70 (VISVFYLIALGILCLALPTLI). Residue Tyr71 is a topological domain, cytoplasmic. Residues 72–92 (IGMYFCAELIVCMLWLAAFVV) traverse the membrane as a helical segment. The Extracellular portion of the chain corresponds to 93–133 (LAKAQGERSCSNTNADGLYYNPYSGQYTADSHRRACNSSQA). Asn129 carries N-linked (GlcNAc...) asparagine glycosylation. A helical membrane pass occupies residues 134–154 (AIAFSGLCFVLFLISVILLGI). At 155–317 (NVLTPIRKRY…EPNRNVNQMP (163 aa)) the chain is on the cytoplasmic side. Residues 204–317 (RTGDVEAGAG…EPNRNVNQMP (114 aa)) form a disordered region. The segment covering 239 to 250 (TTTTNTRYTTTT) has biased composition (low complexity). Polar residues predominate over residues 256-282 (RYTTNDRNPGSANVANSAVDQHAYSTD). A compositionally biased stretch (basic and acidic residues) spans 284–295 (SGDRSYQEKVTE). A compositionally biased stretch (polar residues) spans 302–317 (MSGSTAEPNRNVNQMP).

The protein localises to the membrane. This is an uncharacterized protein from Saccharomyces cerevisiae (strain ATCC 204508 / S288c) (Baker's yeast).